The following is a 146-amino-acid chain: Neuropeptide Y receptor type 2 (146 aa).

Topologically, residues K1–H8 are extracellular. C7 and C87 are disulfide-bonded. Residues L9 to A29 traverse the membrane as a helical segment. The Cytoplasmic portion of the chain corresponds to L30–S49. The chain crosses the membrane as a helical span at residues F50–F70. At R71–G100 the chain is on the extracellular side. The helical transmembrane segment at T101–F121 threads the bilayer. Topologically, residues S122 to R146 are cytoplasmic.

It belongs to the G-protein coupled receptor 1 family.

The protein resides in the cell membrane. Its function is as follows. Receptor for neuropeptide Y and peptide YY. This chain is Neuropeptide Y receptor type 2 (NPY2R), found in Ovis aries (Sheep).